The sequence spans 105 residues: Small ribosomal subunit protein bS18 (105 aa).

Residues 1–10 show a composition bias toward polar residues; sequence MAEETNQQAP. The segment at 1–34 is disordered; the sequence is MAEETNQQAPESGASSSQPTSRPSGPRGGSGGRK. Residues 12-25 are compositionally biased toward low complexity; sequence SGASSSQPTSRPSG.

Belongs to the bacterial ribosomal protein bS18 family. As to quaternary structure, part of the 30S ribosomal subunit. Forms a tight heterodimer with protein bS6.

In terms of biological role, binds as a heterodimer with protein bS6 to the central domain of the 16S rRNA, where it helps stabilize the platform of the 30S subunit. The sequence is that of Small ribosomal subunit protein bS18 from Acidobacterium capsulatum (strain ATCC 51196 / DSM 11244 / BCRC 80197 / JCM 7670 / NBRC 15755 / NCIMB 13165 / 161).